Here is a 214-residue protein sequence, read N- to C-terminus: Putative AgrB-like protein 2 (214 aa).

Transmembrane regions (helical) follow at residues 41 to 61 (IISVLILGLVFNIALEALIFL), 83 to 103 (TLLGIIISICIGFLIKSSFFA), 109 to 129 (LVVFIGIVIFVFGYFIVFKFA), 154 to 174 (ILTIYLFIEVLSIILYYNSGW), and 179 to 199 (PVMLSIIFGVAWQCMTLTYIG).

This sequence belongs to the AgrB family.

The protein localises to the cell membrane. May be involved in the proteolytic processing of a quorum sensing system signal molecule precursor. The protein is Putative AgrB-like protein 2 of Clostridium perfringens (strain 13 / Type A).